Reading from the N-terminus, the 313-residue chain is Ribosomal protein L11 methyltransferase (313 aa).

S-adenosyl-L-methionine contacts are provided by T161, G182, D204, and N247.

Belongs to the methyltransferase superfamily. PrmA family.

The protein resides in the cytoplasm. The enzyme catalyses L-lysyl-[protein] + 3 S-adenosyl-L-methionine = N(6),N(6),N(6)-trimethyl-L-lysyl-[protein] + 3 S-adenosyl-L-homocysteine + 3 H(+). Methylates ribosomal protein L11. The sequence is that of Ribosomal protein L11 methyltransferase from Halalkalibacterium halodurans (strain ATCC BAA-125 / DSM 18197 / FERM 7344 / JCM 9153 / C-125) (Bacillus halodurans).